A 195-amino-acid chain; its full sequence is MATTISAVILAGGQAKRMAGLDKGLQLLQGKPLYQHCLQRLTHQVSSISINANRHQAIYQQSGVEVFGDELEDFQGPLSGILTALERANTDFVLFVPCDSPFLPLNLCEKLQSAVENSKSLLAYANDGEREHPAFSLLSTQLKLPLRAYLQSGHRQMLQFFRQHKGISVDFRLQKQAFVNMNTLQDIEKYQNIYA.

Residues 10–12 (LAG), Lys-23, Asn-51, Asp-69, and Asp-99 contribute to the GTP site. Asp-99 is a binding site for Mg(2+).

It belongs to the MobA family. In terms of assembly, monomer. Mg(2+) serves as cofactor.

Its subcellular location is the cytoplasm. It catalyses the reaction Mo-molybdopterin + GTP + H(+) = Mo-molybdopterin guanine dinucleotide + diphosphate. Functionally, transfers a GMP moiety from GTP to Mo-molybdopterin (Mo-MPT) cofactor (Moco or molybdenum cofactor) to form Mo-molybdopterin guanine dinucleotide (Mo-MGD) cofactor. This is Molybdenum cofactor guanylyltransferase from Histophilus somni (strain 129Pt) (Haemophilus somnus).